A 728-amino-acid chain; its full sequence is Probable LRR receptor-like serine/threonine-protein kinase At1g14390 (728 aa).

Positions 1–27 (MHSSSKSQAFSLTFLLFLFLLPSVSES) are cleaved as a signal peptide. Residues 28–356 (QLISSESRTL…EEDTGIELGL (329 aa)) are Extracellular-facing. Residues Asn55 and Asn85 are each glycosylated (N-linked (GlcNAc...) asparagine). 9 LRR repeats span residues 74 to 96 (NGHV…RFSS), 106 to 130 (LSNL…IIRL), 131 to 155 (SSSL…ISSL), 157 to 178 (NLRS…LRGL), 179 to 202 (SNLQ…LASN), 204 to 224 (ITIS…IKKL), 225 to 248 (NKLQ…LLSL), 249 to 272 (PSLQ…SLCN), and 274 to 295 (KLRI…CFSS). 2 N-linked (GlcNAc...) asparagine glycosylation sites follow: Asn138 and Asn169. Residue Asn210 is glycosylated (N-linked (GlcNAc...) asparagine). N-linked (GlcNAc...) asparagine glycosylation is found at Asn253 and Asn267. Residues 357 to 377 (VIGIIIGVILVSAVLAGLVLV) form a helical membrane-spanning segment. The Cytoplasmic segment spans residues 378 to 728 (RMRKSRSKEE…ENLGLGGSEL (351 aa)). Positions 421 to 709 (TMRSAVIGLS…DVVWNLQYTI (289 aa)) constitute a Protein kinase domain.

This sequence belongs to the protein kinase superfamily. Ser/Thr protein kinase family.

It localises to the membrane. It catalyses the reaction L-seryl-[protein] + ATP = O-phospho-L-seryl-[protein] + ADP + H(+). The catalysed reaction is L-threonyl-[protein] + ATP = O-phospho-L-threonyl-[protein] + ADP + H(+). The chain is Probable LRR receptor-like serine/threonine-protein kinase At1g14390 from Arabidopsis thaliana (Mouse-ear cress).